The chain runs to 455 residues: Golgi pH regulator A (455 aa).

The next 5 membrane-spanning stretches (helical) occupy residues 5–25 (IDSSIMITSQILFFGFGWLFF), 46–66 (VTFAFSCTMFELIIFEILGVL), 79–99 (LCVILLILVFMVPFYIGYFIV), 114–134 (CLLWLTFMYFFWKLGDPFPIL), and 150–170 (VGVIGVTLMALLSGFGAVNCP). Residues Asn180 and Asn243 are each glycosylated (N-linked (GlcNAc...) asparagine). Helical transmembrane passes span 290-310 (GYFFSIYCVWKIFMATINIVF), 343-363 (ISFILVGIIIVTSIRGLLITL), 378-398 (VIVLLLAQIMGMYFVSSVLLI), and 425-445 (WFDVIFLVSALSSILFLYLAH).

It belongs to the Golgi pH regulator (TC 1.A.38) family. As to quaternary structure, homotrimer. Interacts with RABL3; the interaction stabilizes GPR89A. As to expression, ubiquitous.

The protein localises to the golgi apparatus membrane. The enzyme catalyses iodide(out) = iodide(in). The catalysed reaction is chloride(in) = chloride(out). It catalyses the reaction bromide(in) = bromide(out). It carries out the reaction fluoride(in) = fluoride(out). Functionally, voltage-gated channel that enables the transfer of monoatomic anions such as iodide, chloride, bromide and fluoride which may function in counter-ion conductance and participates in Golgi acidification. Plays a role in lymphocyte development, probably by acting as a RABL3 effector in hematopoietic cells. This chain is Golgi pH regulator A, found in Homo sapiens (Human).